The chain runs to 119 residues: Large ribosomal subunit protein uL24 (119 aa).

It belongs to the universal ribosomal protein uL24 family. Part of the 50S ribosomal subunit.

One of two assembly initiator proteins, it binds directly to the 5'-end of the 23S rRNA, where it nucleates assembly of the 50S subunit. Functionally, located at the polypeptide exit tunnel on the outside of the subunit. This is Large ribosomal subunit protein uL24 from Saccharolobus solfataricus (strain ATCC 35092 / DSM 1617 / JCM 11322 / P2) (Sulfolobus solfataricus).